A 257-amino-acid polypeptide reads, in one-letter code: Protein-tyrosine-phosphatase IBR5 (257 aa).

Residues 49 to 185 form the Tyrosine-protein phosphatase domain; that stretch reads FPSEILPEFL…LQEFEQGIFG (137 aa). Catalysis depends on Cys-129, which acts as the Phosphocysteine intermediate. The segment at 235–257 is disordered; it reads QEFTFGATPPKPTTGGDIAMDGS.

It belongs to the protein-tyrosine phosphatase family. In terms of assembly, interacts with SKP1A/ASK1 and with MPK12. As to expression, expressed in root tips and vasculature, cotyledons, stems, leaves vasculature and hydathodes, flowers, siliques, and seeds.

The protein resides in the nucleus. The catalysed reaction is O-phospho-L-tyrosyl-[protein] + H2O = L-tyrosyl-[protein] + phosphate. In terms of biological role, required for the transduction of auxin and abscisic acid (ABA) signaling pathways. Dephosphorylates and inactivates the MAP kinase MPK12. The sequence is that of Protein-tyrosine-phosphatase IBR5 (IBR5) from Arabidopsis thaliana (Mouse-ear cress).